The sequence spans 333 residues: BRISC and BRCA1-A complex member 1 (333 aa).

Met1 is modified (N-acetylmethionine). The disordered stretch occupies residues 1-85 (MEVAEANSPT…PWQVPASASE (85 aa)). The residue at position 8 (Ser8) is a Phosphoserine. A compositionally biased stretch (acidic residues) spans 10–24 (TEEEEEEEEEGEETI). 2 positions are modified to phosphoserine: Ser33 and Ser53. Residues 58-67 (EAATADGGAA) are compositionally biased toward low complexity. A VWFA-like region spans residues 99-302 (VIICLDLSEE…LELHNCMAKL (204 aa)).

The protein belongs to the BABAM1 family. As to quaternary structure, component of the ARISC complex, at least composed of UIMC1/RAP80, ABRAXAS1, BRCC3/BRCC36, BABAM2 and BABAM1/NBA1. Component of the BRCA1-A complex, at least composed of BRCA1, BARD1, UIMC1/RAP80, ABRAXAS1, BRCC3/BRCC36, BABAM2 and BABAM1/NBA1. In the BRCA1-A complex, interacts directly with ABRAXAS1 and BABAM2. Component of the BRISC complex, at least composed of ABRAXAS2, BRCC3/BRCC36, BABAM2 and BABAM1/NBA1. Identified in a complex with SHMT2 and the other subunits of the BRISC complex.

The protein resides in the cytoplasm. Its subcellular location is the nucleus. Component of the BRCA1-A complex, a complex that specifically recognizes 'Lys-63'-linked ubiquitinated histones H2A and H2AX at DNA lesions sites, leading to target the BRCA1-BARD1 heterodimer to sites of DNA damage at double-strand breaks (DSBs). The BRCA1-A complex also possesses deubiquitinase activity that specifically removes 'Lys-63'-linked ubiquitin on histones H2A and H2AX. In the BRCA1-A complex, it is required for the complex integrity and its localization at DSBs. Component of the BRISC complex, a multiprotein complex that specifically cleaves 'Lys-63'-linked ubiquitin in various substrates. In these 2 complexes, it is probably required to maintain the stability of BABAM2 and help the 'Lys-63'-linked deubiquitinase activity mediated by BRCC3/BRCC36 component. The BRISC complex is required for normal mitotic spindle assembly and microtubule attachment to kinetochores via its role in deubiquitinating NUMA1. Plays a role in interferon signaling via its role in the deubiquitination of the interferon receptor IFNAR1; deubiquitination increases IFNAR1 activity by enhancing its stability and cell surface expression. Down-regulates the response to bacterial lipopolysaccharide (LPS) via its role in IFNAR1 deubiquitination. This is BRISC and BRCA1-A complex member 1 (Babam1) from Mus musculus (Mouse).